A 320-amino-acid polypeptide reads, in one-letter code: Pyrroline-5-carboxylate reductase (320 aa).

Belongs to the pyrroline-5-carboxylate reductase family.

The catalysed reaction is L-proline + NADP(+) = (S)-1-pyrroline-5-carboxylate + NADPH + 2 H(+). The enzyme catalyses L-proline + NAD(+) = (S)-1-pyrroline-5-carboxylate + NADH + 2 H(+). It participates in amino-acid biosynthesis; L-proline biosynthesis; L-proline from L-glutamate 5-semialdehyde: step 1/1. The protein is Pyrroline-5-carboxylate reductase (P5CR) of Lophium arboricola (Zalerion arboricola).